Consider the following 317-residue polypeptide: Glycerol-3-phosphate dehydrogenase [NAD(P)+] (317 aa).

NADPH-binding residues include Trp-20, Arg-40, Arg-41, and Lys-88. Residues Lys-88 and Gly-116 each coordinate sn-glycerol 3-phosphate. Residue Ser-120 participates in NADPH binding. Residues Lys-171, Asp-224, Ser-234, Arg-235, and Asn-236 each contribute to the sn-glycerol 3-phosphate site. Lys-171 (proton acceptor) is an active-site residue. Arg-235 contacts NADPH. Glu-261 lines the NADPH pocket.

It belongs to the NAD-dependent glycerol-3-phosphate dehydrogenase family.

The protein localises to the cytoplasm. The catalysed reaction is sn-glycerol 3-phosphate + NAD(+) = dihydroxyacetone phosphate + NADH + H(+). The enzyme catalyses sn-glycerol 3-phosphate + NADP(+) = dihydroxyacetone phosphate + NADPH + H(+). Its pathway is membrane lipid metabolism; glycerophospholipid metabolism. Functionally, catalyzes the reduction of the glycolytic intermediate dihydroxyacetone phosphate (DHAP) to sn-glycerol 3-phosphate (G3P), the key precursor for phospholipid synthesis. This chain is Glycerol-3-phosphate dehydrogenase [NAD(P)+], found in Synechocystis sp. (strain ATCC 27184 / PCC 6803 / Kazusa).